The sequence spans 491 residues: GTPase Der (491 aa).

EngA-type G domains follow at residues 54-217 (PVLA…PEYS) and 229-402 (RRIA…ESWD). Residues 60 to 67 (GRPNVGKS), 107 to 111 (DTGGW), 169 to 172 (NKVD), 235 to 242 (GRPNVGKS), 282 to 286 (DTAGI), and 347 to 350 (NKWD) each bind GTP. Residues 403–485 (RRIPTGRLNA…PIEVNMRVRE (83 aa)) form the KH-like domain.

The protein belongs to the TRAFAC class TrmE-Era-EngA-EngB-Septin-like GTPase superfamily. EngA (Der) GTPase family. Associates with the 50S ribosomal subunit.

In terms of biological role, GTPase that plays an essential role in the late steps of ribosome biogenesis. This chain is GTPase Der, found in Paenarthrobacter aurescens (strain TC1).